The primary structure comprises 854 residues: Transcription factor asR3 (854 aa).

The segment at residues 19–45 (CWECRRRKIKCDRNDPCAHCIRHETQC) is a DNA-binding region (zn(2)-C6 fungal-type). Residues 56–156 (TDSDVSRTRP…SLSTNTSPSA (101 aa)) form a disordered region. 2 stretches are compositionally biased toward polar residues: residues 78 to 90 (ASGS…TRPS) and 125 to 145 (LNPS…SSRG). The span at 146-156 (PSLSTNTSPSA) shows a compositional bias: low complexity.

The protein resides in the nucleus. Functionally, transcription factor; part of the gene cluster that mediates the biosynthesis of xenovulene A, an unusual meroterpenoid that has potent inhibitory effects on the human gamma-aminobutyrate A (GABAA) benzodiazepine receptor. This Sarocladium schorii (Acremonium strictum (strain IMI 501407)) protein is Transcription factor asR3.